A 72-amino-acid chain; its full sequence is Dermaseptin AA-3-4 (72 aa).

The first 22 residues, 1–22, serve as a signal peptide directing secretion; that stretch reads MAFLKKSLFLVLFLGLVSLSIC. A propeptide spanning residues 23–43 is cleaved from the precursor; that stretch reads DEEKRENEDEEEQEDDEQSEE. The tract at residues 24 to 45 is disordered; the sequence is EEKRENEDEEEQEDDEQSEEKR. Residues 30 to 41 are compositionally biased toward acidic residues; that stretch reads EDEEEQEDDEQS.

It belongs to the frog skin active peptide (FSAP) family. In terms of tissue distribution, expressed by the skin glands.

It is found in the secreted. Functionally, possesses a potent antimicrobial activity against Gram-positive and Gram-negative bacteria. Probably acts by disturbing membrane functions with its amphipathic structure. The polypeptide is Dermaseptin AA-3-4 (Agalychnis annae (Blue-sided leaf frog)).